The primary structure comprises 126 residues: Histone H2B 5 (126 aa).

The segment covering 1 to 12 (MPEPAKSAPAPK) has biased composition (low complexity). The segment at 1–35 (MPEPAKSAPAPKKGSKKAVTKTQKKGDKKRRKSRK) is disordered. An N6-acetyllysine mark is found at K6 and K13. Positions 13-34 (KGSKKAVTKTQKKGDKKRRKSR) are enriched in basic residues. S15 is subject to Phosphoserine. Residues K16 and K21 each carry the N6-acetyllysine modification. The O-linked (GlcNAc) serine glycan is linked to S113. Residue K121 forms a Glycyl lysine isopeptide (Lys-Gly) (interchain with G-Cter in ubiquitin) linkage.

It belongs to the histone H2B family. In terms of assembly, the nucleosome is a histone octamer containing two molecules each of H2A, H2B, H3 and H4 assembled in one H3-H4 heterotetramer and two H2A-H2B heterodimers. The octamer wraps approximately 147 bp of DNA. Post-translationally, monoubiquitination of Lys-121 by the BRE1 gives a specific tag for epigenetic transcriptional activation and is also prerequisite for histone H3 'Lys-4' and 'Lys-79' methylation. Phosphorylated on Ser-15 during apoptosis; which facilitates apoptotic chromatin condensation. In terms of processing, glcNAcylation at Ser-113 promotes monoubiquitination of Lys-121. It fluctuates in response to extracellular glucose, and associates with transcribed genes.

It is found in the nucleus. Its subcellular location is the chromosome. In terms of biological role, core component of nucleosome. Nucleosomes wrap and compact DNA into chromatin, limiting DNA accessibility to the cellular machineries which require DNA as a template. Histones thereby play a central role in transcription regulation, DNA repair, DNA replication and chromosomal stability. DNA accessibility is regulated via a complex set of post-translational modifications of histones, also called histone code, and nucleosome remodeling. The chain is Histone H2B 5 (H2B-V) from Gallus gallus (Chicken).